The following is a 259-amino-acid chain: Pimeloyl-[acyl-carrier protein] methyl ester esterase (259 aa).

One can recognise an AB hydrolase-1 domain in the interval 16-244 (LVFIHGWGLN…ASHAPFLSHP (229 aa)). Substrate contacts are provided by residues Trp-22, 82–83 (SL), and 143–147 (FFNIQ). The Nucleophile role is filled by Ser-82. Active-site residues include Asp-207 and His-237. Position 237 (His-237) interacts with substrate.

The protein belongs to the AB hydrolase superfamily. Carboxylesterase BioH family. Monomer.

It localises to the cytoplasm. It catalyses the reaction 6-carboxyhexanoyl-[ACP] methyl ester + H2O = 6-carboxyhexanoyl-[ACP] + methanol + H(+). It participates in cofactor biosynthesis; biotin biosynthesis. In terms of biological role, the physiological role of BioH is to remove the methyl group introduced by BioC when the pimeloyl moiety is complete. It allows to synthesize pimeloyl-ACP via the fatty acid synthetic pathway through the hydrolysis of the ester bonds of pimeloyl-ACP esters. This is Pimeloyl-[acyl-carrier protein] methyl ester esterase from Wigglesworthia glossinidia brevipalpis.